The following is a 356-amino-acid chain: GDP-mannose:di-myo-inositol-1,3'-phosphate beta-1,2-mannosyltransferase (356 aa).

This sequence belongs to the MDIP synthase family. Requires Mg(2+) as cofactor.

The catalysed reaction is bis(myo-inositol) 1,3'-phosphate + GDP-alpha-D-mannose = 2-O-(beta-D-mannosyl)-bis(myo-inositol) 1,3'-phosphate + GDP + H(+). It carries out the reaction 2-O-(beta-D-mannosyl)-bis(myo-inositol) 1,3'-phosphate + GDP-alpha-D-mannose = 2-O-(beta-D-mannosyl-(1-&gt;2)-beta-D-mannosyl)-bis(myo-inositol) 1,3'-phosphate + GDP + H(+). The enzyme catalyses bis(myo-inositol) 1,3'-phosphate + 2 GDP-alpha-D-mannose = 2-O-(beta-D-mannosyl-(1-&gt;2)-beta-D-mannosyl)-bis(myo-inositol) 1,3'-phosphate + 2 GDP + 2 H(+). Catalyzes the transfer of the mannosyl group from GDP-mannose to di-myo-inositol-1,3'-phosphate (DIP), producing mannosyl-di-myo-inositol phosphate (MDIP). Can also use MDIP as an acceptor of a second mannose residue, yielding di-mannosyl-di-myo-inositol phosphate (MMDIP). Minor amounts of the tri-mannosylated form are also formed. The chain is GDP-mannose:di-myo-inositol-1,3'-phosphate beta-1,2-mannosyltransferase from Thermotoga maritima (strain ATCC 43589 / DSM 3109 / JCM 10099 / NBRC 100826 / MSB8).